Consider the following 101-residue polypeptide: ATP synthase subunit c (101 aa).

Transmembrane regions (helical) follow at residues 35–55 (IGAGLASVGILGTGVGQGLIG) and 81–101 (GISESGAIYSLVIAILLIFVV).

It belongs to the ATPase C chain family. In terms of assembly, F-type ATPases have 2 components, F(1) - the catalytic core - and F(0) - the membrane proton channel. F(1) has five subunits: alpha(3), beta(3), gamma(1), delta(1), epsilon(1). F(0) has three main subunits: a(1), b(2) and c(10-14). The alpha and beta chains form an alternating ring which encloses part of the gamma chain. F(1) is attached to F(0) by a central stalk formed by the gamma and epsilon chains, while a peripheral stalk is formed by the delta and b chains.

The protein localises to the cell membrane. Its function is as follows. F(1)F(0) ATP synthase produces ATP from ADP in the presence of a proton or sodium gradient. F-type ATPases consist of two structural domains, F(1) containing the extramembraneous catalytic core and F(0) containing the membrane proton channel, linked together by a central stalk and a peripheral stalk. During catalysis, ATP synthesis in the catalytic domain of F(1) is coupled via a rotary mechanism of the central stalk subunits to proton translocation. In terms of biological role, key component of the F(0) channel; it plays a direct role in translocation across the membrane. A homomeric c-ring of between 10-14 subunits forms the central stalk rotor element with the F(1) delta and epsilon subunits. The protein is ATP synthase subunit c of Mycoplasma capricolum subsp. capricolum (strain California kid / ATCC 27343 / NCTC 10154).